A 422-amino-acid polypeptide reads, in one-letter code: UDP-N-acetylglucosamine 1-carboxyvinyltransferase (422 aa).

Position 22–23 (22–23 (KN)) interacts with phosphoenolpyruvate. Arg94 is a UDP-N-acetyl-alpha-D-glucosamine binding site. Cys118 acts as the Proton donor in catalysis. Cys118 bears the 2-(S-cysteinyl)pyruvic acid O-phosphothioketal mark. Residues 123 to 127 (RPVDL), Asp309, and Ile331 contribute to the UDP-N-acetyl-alpha-D-glucosamine site.

It belongs to the EPSP synthase family. MurA subfamily.

The protein resides in the cytoplasm. It catalyses the reaction phosphoenolpyruvate + UDP-N-acetyl-alpha-D-glucosamine = UDP-N-acetyl-3-O-(1-carboxyvinyl)-alpha-D-glucosamine + phosphate. It functions in the pathway cell wall biogenesis; peptidoglycan biosynthesis. Its function is as follows. Cell wall formation. Adds enolpyruvyl to UDP-N-acetylglucosamine. In Cereibacter sphaeroides (strain ATCC 17023 / DSM 158 / JCM 6121 / CCUG 31486 / LMG 2827 / NBRC 12203 / NCIMB 8253 / ATH 2.4.1.) (Rhodobacter sphaeroides), this protein is UDP-N-acetylglucosamine 1-carboxyvinyltransferase.